The chain runs to 131 residues: Small ribosomal subunit protein uS11 (131 aa).

It belongs to the universal ribosomal protein uS11 family. In terms of assembly, part of the 30S ribosomal subunit. Interacts with proteins S7 and S18. Binds to IF-3.

In terms of biological role, located on the platform of the 30S subunit, it bridges several disparate RNA helices of the 16S rRNA. Forms part of the Shine-Dalgarno cleft in the 70S ribosome. This is Small ribosomal subunit protein uS11 from Deinococcus radiodurans (strain ATCC 13939 / DSM 20539 / JCM 16871 / CCUG 27074 / LMG 4051 / NBRC 15346 / NCIMB 9279 / VKM B-1422 / R1).